A 68-amino-acid chain; its full sequence is Large ribosomal subunit protein uL29 (68 aa).

The protein belongs to the universal ribosomal protein uL29 family.

In Streptococcus agalactiae serotype Ia (strain ATCC 27591 / A909 / CDC SS700), this protein is Large ribosomal subunit protein uL29.